The chain runs to 37 residues: Large ribosomal subunit protein bL36c (37 aa).

Component of the chloroplast large ribosomal subunit (LSU). Mature 70S chloroplast ribosomes of higher plants consist of a small (30S) and a large (50S) subunit. The 30S small subunit contains 1 molecule of ribosomal RNA (16S rRNA) and 24 different proteins. The 50S large subunit contains 3 rRNA molecules (23S, 5S and 4.5S rRNA) and 33 different proteins.

The protein resides in the plastid. The protein localises to the chloroplast. Component of the chloroplast ribosome (chloro-ribosome), a dedicated translation machinery responsible for the synthesis of chloroplast genome-encoded proteins, including proteins of the transcription and translation machinery and components of the photosynthetic apparatus. This is Large ribosomal subunit protein bL36c (rpl36) from Spinacia oleracea (Spinach).